Reading from the N-terminus, the 314-residue chain is Homeobox protein SIX3 (314 aa).

Positions 188–247 (GEQKTHCFKERTRSLLREWYLQDPYPNPSKKRELAQATGLTPTQVGNWFKNRRQRDRAAA) form a DNA-binding region, homeobox. Disordered regions lie at residues 214 to 233 (NPSKKRELAQATGLTPTQVG) and 240 to 314 (RQRD…ECDV). Residues 271–293 (PTHSSAESPSTAASPTTSVSSLT) are compositionally biased toward low complexity. Residues 298 to 314 (TGTSILSVTSSDSECDV) show a composition bias toward polar residues.

Belongs to the SIX/Sine oculis homeobox family.

The protein resides in the nucleus. Functionally, transcriptional regulator which can act as both a transcriptional repressor and activator by binding a ATTA homeodomain core recognition sequence on these target genes. During forebrain development represses WNT1 expression allowing zona limitans intrathalamica formation and thereby ensuring proper anterio-posterior patterning of the diencephalon and formation of the rostral diencephalon. Acts as a direct upstream activator of SHH expression in the rostral diencephalon ventral midline and that in turn SHH maintains its expression. In addition, Six3 activity is required for the formation of the telencephalon. During postnatal stages of brain development is necessary for ependymal cell maturation by promoting the maturation of radial glia into ependymal cells through regulation of neuroblast proliferation and migration. Acts on the proliferation and differentiation of neural progenitor cells through activating transcription of CCND1 and CCND2. During early lens formation plays a role in lens induction and specification by activating directly PAX6 in the presumptive lens ectoderm. In turn PAX6 activates SIX3 resulting in activation of PDGFRA and CCND1 promoting cell proliferation. Also is required for the neuroretina development by directly suppressing WNT8B expression in the anterior neural plate territory. Its action during retina development and lens morphogenesis is AES and TLE4-dependent manner. Furthermore, during eye development regulates several genes expression. Before and during early lens development represses the CRYGF promoter by binding a SIX repressor element. Directly activates RHO transcription, or cooperates with CRX or NRL. Six3 also functions in the formation of the proximodistal axis of the optic cup, and promotes the formation of optic vesicles-like structures. During pituitary development, acts in parallel or alternatively with HESX1 to control cell proliferation through Wnt/beta-catenin pathway. Plays a role in eye development by suppressing WNT1 expression and in dorsal-ventral patterning by repressing BMP signaling pathway. This is Homeobox protein SIX3 (SIX3) from Gallus gallus (Chicken).